The primary structure comprises 448 residues: Glucose-6-phosphate isomerase (448 aa).

Glu291 serves as the catalytic Proton donor. Residues His312 and Lys425 contribute to the active site.

Belongs to the GPI family.

Its subcellular location is the cytoplasm. It carries out the reaction alpha-D-glucose 6-phosphate = beta-D-fructose 6-phosphate. The protein operates within carbohydrate biosynthesis; gluconeogenesis. It functions in the pathway carbohydrate degradation; glycolysis; D-glyceraldehyde 3-phosphate and glycerone phosphate from D-glucose: step 2/4. Catalyzes the reversible isomerization of glucose-6-phosphate to fructose-6-phosphate. This chain is Glucose-6-phosphate isomerase, found in Symbiobacterium thermophilum (strain DSM 24528 / JCM 14929 / IAM 14863 / T).